We begin with the raw amino-acid sequence, 125 residues long: Small ribosomal subunit protein uS12c (125 aa).

Belongs to the universal ribosomal protein uS12 family. In terms of assembly, part of the 30S ribosomal subunit.

The protein resides in the plastid. In terms of biological role, with S4 and S5 plays an important role in translational accuracy. Located at the interface of the 30S and 50S subunits. The polypeptide is Small ribosomal subunit protein uS12c (rps12) (Euglena longa (Euglenophycean alga)).